We begin with the raw amino-acid sequence, 220 residues long: uncharacterized protein (220 aa).

The tract at residues 194–220 is disordered; that stretch reads DQSQQQATKSNSKTKKLKGNHGEKTKI. Over residues 195 to 204 the composition is skewed to polar residues; that stretch reads QSQQQATKSN.

This is an uncharacterized protein from Borreliella burgdorferi (strain ATCC 35210 / DSM 4680 / CIP 102532 / B31) (Borrelia burgdorferi).